The sequence spans 1303 residues: Zinc finger CCCH domain-containing protein 4 (1303 aa).

A compositionally biased stretch (pro residues) spans 1–33 (MEAAPGTPPPPPSESPPPPSPPPPSTPSPPPCS). The interval 1 to 388 (MEAAPGTPPP…RDHDKPHQQS (388 aa)) is disordered. The span at 53 to 73 (DREDGELEEGELEDDGAEETQ) shows a compositional bias: acidic residues. Phosphothreonine is present on residues T72 and T75. S76, S92, and S94 each carry phosphoserine. Residues 80-99 (ERSRKEKGEKHHSDSDEEKS) are compositionally biased toward basic and acidic residues. A coiled-coil region spans residues 95-128 (DEEKSHRRLKRKRKKEREKEKRRSKKRRKSKHKR). The span at 100 to 130 (HRRLKRKRKKEREKEKRRSKKRRKSKHKRHA) shows a compositional bias: basic residues. The span at 135 to 144 (DFSDFSDDSD) shows a compositional bias: acidic residues. Phosphotyrosine is present on Y155. The segment covering 194-218 (EDYENEQYGEYEGDEEEDMGKEDYD) has biased composition (acidic residues). The span at 219–235 (DFTKELNQYRRAKEGSS) shows a compositional bias: basic and acidic residues. A compositionally biased stretch (basic residues) spans 238 to 251 (RGSRGRGRGYRGRG). Gly residues predominate over residues 252 to 274 (SRGGSRGRGMGRGSRGRGRGSMG). Residues 278 to 304 (PEDEEDFYEEEMDYGESEEPMGDDDYD) show a composition bias toward acidic residues. The span at 305 to 321 (EYSKELNQYRRSKDSRG) shows a compositional bias: basic and acidic residues. Residues 323–346 (GLSRGRGRGSRGRGKGMGRGRGRG) are compositionally biased toward basic residues. The span at 358–369 (NDDEDFYDEDMG) shows a compositional bias: acidic residues. Residues 377 to 388 (RSRDHDKPHQQS) are compositionally biased toward basic and acidic residues. 3 C3H1-type zinc fingers span residues 390-417 (KKGKVICKYFVEGRCTWGDHCNFSHDIE), 419-446 (PKKRELCKFYITGFCARAENCPYMHGDF), and 447-470 (PCKLYHTTGNCINGDDCMFSHDPL). A compositionally biased stretch (acidic residues) spans 486-496 (AEAGAEDEKEV). Residues 486 to 571 (AEAGAEDEKE…HEPLSPQQLQ (86 aa)) form a disordered region. Pro residues-rich tracts occupy residues 507-529 (LPKPPPGVGLLPTPPRPPGPQAP) and 539-558 (GGPPPPPPPPPPPPGPPQMP). At R601 the chain carries Asymmetric dimethylarginine. The span at 605 to 624 (PGGPPGPMGPGPNMGPPGPM) shows a compositional bias: pro residues. Disordered regions lie at residues 605-685 (PGGP…SGMM), 710-955 (GLLG…PRSQ), and 996-1288 (PPVP…ASLK). A compositionally biased stretch (basic and acidic residues) spans 630 to 650 (PDMHPDMHPDMHPDMHADMHA). Residues 659 to 673 (NPGPPMGPGGPPMMP) show a composition bias toward pro residues. 2 stretches are compositionally biased toward basic and acidic residues: residues 717-739 (DYGHYEELPGEPGEHLFPEHPLE) and 782-795 (ERARRLAESSKQDR). The stretch at 767-800 (RALYLRIQQKQQEEEERARRLAESSKQDRENEEG) forms a coiled coil. 2 positions are modified to phosphoserine: S807 and S808. Residues 815–843 (SSVTSILKTLRQQTSSRPPASVGELSSSG) show a composition bias toward polar residues. Residues 860-875 (ADPRLSRDPRLTRHVE) show a composition bias toward basic and acidic residues. Residues S904, S907, and S908 each carry the phosphoserine modification. A compositionally biased stretch (low complexity) spans 904–918 (SLHSSPVGPSSSKGS). 2 stretches are compositionally biased toward polar residues: residues 1028-1038 (GASTDSSTQGA) and 1053-1062 (VNATGSSAAP). A compositionally biased stretch (basic and acidic residues) spans 1067–1084 (KPSDPRVRKAPTDPRLQK). A compositionally biased stretch (low complexity) spans 1097–1110 (PGPAEAPSPTASPS). Residue S1104 is modified to Phosphoserine. A Phosphothreonine modification is found at T1106. A phosphoserine mark is found at S1108, S1110, and S1114. At T1118 the chain carries Phosphothreonine. Over residues 1129–1139 (GGLGQGGGGGQ) the composition is skewed to gly residues. Over residues 1224 to 1234 (KAAAAPAATTA) the composition is skewed to low complexity. The segment covering 1235–1245 (TPPPEGAPPQP) has biased composition (pro residues). Residues 1259–1268 (VKQTPKTGSG) are compositionally biased toward polar residues. Phosphoserine occurs at positions 1269 and 1275.

It belongs to the suppressor of sable family. Interacts with WDR82.

It is found in the chromosome. In terms of biological role, RNA-binding protein that suppresses transcription of long non-coding RNAs (lncRNAs). LncRNAs are defined as transcripts more than 200 nucleotides that are not translated into protein. Together with WDR82, part of a transcription termination checkpoint that promotes transcription termination of lncRNAs and their subsequent degradation by the exosome. The transcription termination checkpoint is activated by the inefficiently spliced first exon of lncRNAs. The chain is Zinc finger CCCH domain-containing protein 4 from Homo sapiens (Human).